The following is a 618-amino-acid chain: MSSIQPVGSSGPSSNINSPTLPPGTAPFFSGTVTGQNARSSPAPPSNASVQTDGTRSKRNKRDSRKKREAKGLDQESIPPKKKAAVAPNSALPSSDISILRPLLLAEPRASDLLPPQPRQLSFVSRKTSDVLGQSWDFYEVVDKLTNKNGFRYSYAIADPGFPHIKYRQTDVPPYHARFSFEDSPAAIFFSEDARAVTASSAWHTARANVCAREGAYYYEARVINGIPNNSQSISANESSHRTPKGHVRLGFARREADLDANVGVDCYGYGIRDVNGEVVNRMRCEYFFPKGESIREGDVIGMLITLPPLSLHKKVVEGTYDPAVDGDGTSPTSEAHTSTNLIRDRIPFHYKSDFCWQQSNVFSTKHLRDYAFNLKETPTFGPPSPFNSEDPSLRTLPGSSITIFKNGEKMGTPFKELYAFLPPASRLANGTNNLGIGERENADDGMIGYYPAVSCYGGGAVECRFEGPWWVGPPSHADNGEPVRGIGERFNEQIVEDVVADIVDEVEAMLIWGGVDGDVVGNAEVDSAGAGAVGGSEVLKGGVGAAFDPRLDSVPGAAEFADTENISNGLEAGVTDADAGHLTTEDTLSVGHEGSPNPATPSAPLENTVPTEDVEMS.

The disordered stretch occupies residues 1-91; that stretch reads MSSIQPVGSS…KKAAVAPNSA (91 aa). 2 stretches are compositionally biased toward low complexity: residues 8 to 19 and 37 to 49; these read GSSGPSSNINSP and NARSSPAPPSNAS. Over residues 57 to 69 the composition is skewed to basic residues; it reads SKRNKRDSRKKRE. The region spanning 157-368 is the B30.2/SPRY domain; it reads IADPGFPHIK…QSNVFSTKHL (212 aa). The segment at 588–618 is disordered; it reads TLSVGHEGSPNPATPSAPLENTVPTEDVEMS.

The protein belongs to the cclA family. In terms of assembly, component of the COMPASS complex.

The protein resides in the nucleus. The protein localises to the chromosome. It localises to the telomere. In terms of biological role, component of the COMPASS (Set1C) complex that specifically mono-, di- and trimethylates histone H3 to form H3K4me1/2/3, which subsequently plays a role in telomere length maintenance and transcription elongation regulation. Controls the production of several secondary metabolites, including gliotoxin, but does not contribute to pathogenicity. The sequence is that of COMPASS component cclA from Aspergillus fumigatus (strain ATCC MYA-4609 / CBS 101355 / FGSC A1100 / Af293) (Neosartorya fumigata).